The primary structure comprises 379 residues: Deoxyhypusine synthase (379 aa).

NAD(+) contacts are provided by residues 104–108 (SNLVS), 130–132 (TAG), E136, and D237. Residue 135-136 (EE) participates in spermidine binding. D242 is a binding site for spermidine. An NAD(+)-binding site is contributed by G293. Residue H298 coordinates spermidine. 318–319 (TA) contacts NAD(+). Spermidine contacts are provided by residues 324 to 326 (GSD) and 333 to 339 (EAVSWGK). The Nucleophile role is filled by K339. NAD(+) is bound at residue 352–353 (DA).

The protein belongs to the deoxyhypusine synthase family. As to quaternary structure, homotetramer. NAD(+) is required as a cofactor.

It catalyses the reaction [eIF5A protein]-L-lysine + spermidine = [eIF5A protein]-deoxyhypusine + propane-1,3-diamine. Its pathway is protein modification; eIF5A hypusination. Its function is as follows. Catalyzes the NAD-dependent oxidative cleavage of spermidine and the subsequent transfer of the butylamine moiety of spermidine to the epsilon-amino group of a specific lysine residue of the eIF-5A precursor protein to form the intermediate deoxyhypusine residue. Also able to produce homospermidine from putrescine. The polypeptide is Deoxyhypusine synthase (DHS1) (Nicotiana tabacum (Common tobacco)).